The primary structure comprises 228 residues: Large ribosomal subunit protein bL25 (228 aa).

The disordered stretch occupies residues 1 to 24 (MATVMELKATARPKSGKGAARAER).

This sequence belongs to the bacterial ribosomal protein bL25 family. CTC subfamily. As to quaternary structure, part of the 50S ribosomal subunit; part of the 5S rRNA/L5/L18/L25 subcomplex. Contacts the 5S rRNA. Binds to the 5S rRNA independently of L5 and L18.

Functionally, this is one of the proteins that binds to the 5S RNA in the ribosome where it forms part of the central protuberance. In Nitrobacter winogradskyi (strain ATCC 25391 / DSM 10237 / CIP 104748 / NCIMB 11846 / Nb-255), this protein is Large ribosomal subunit protein bL25.